The primary structure comprises 61 residues: DGYIKGKSGCRVACLIGNQGCLKDCRAYGASYGYCWTWGLACWCEGLPDNKTWKSESNTCG.

Positions 1-61 constitute an LCN-type CS-alpha/beta domain; it reads DGYIKGKSGC…TWKSESNTCG (61 aa). 4 cysteine pairs are disulfide-bonded: cysteine 10-cysteine 60, cysteine 14-cysteine 35, cysteine 21-cysteine 42, and cysteine 25-cysteine 44. Glycine 61 carries the glycine amide modification.

It belongs to the long (4 C-C) scorpion toxin superfamily. Sodium channel inhibitor family. Beta subfamily. In terms of tissue distribution, expressed by the venom gland.

Its subcellular location is the secreted. In terms of biological role, on insects, this depressant beta-toxins cause a transient contraction paralysis followed by a slow flaccid paralysis. They bind voltage-independently at site-4 of sodium channels (Nav) and shift the voltage of activation toward more negative potentials thereby affecting sodium channel activation and promoting spontaneous and repetitive firing. This toxin is active against insects and mammals. It is capable of binding to not only cockroach neuronal membranes, but also rat cerebrocortical and hippocampal synaptosomes. This toxin also has potent peripheral and central suppressive effects on rat nociceptive spontaneous responses, thermal hyperalgesia and spinal c-Fos expression induced by formalin and carrageenan, which may be derived from its modulation on the activity of sodium channels of the neurons. Administration of BmKIT2 into rat brain can also suppress the epileptic seizures significantly. The sequence is that of Beta-insect depressant toxin BmKIT2 from Olivierus martensii (Manchurian scorpion).